A 300-amino-acid polypeptide reads, in one-letter code: Ribosomal protein L11 methyltransferase (300 aa).

Residues threonine 152, glycine 173, aspartate 195, and asparagine 234 each contribute to the S-adenosyl-L-methionine site.

This sequence belongs to the methyltransferase superfamily. PrmA family.

The protein localises to the cytoplasm. It carries out the reaction L-lysyl-[protein] + 3 S-adenosyl-L-methionine = N(6),N(6),N(6)-trimethyl-L-lysyl-[protein] + 3 S-adenosyl-L-homocysteine + 3 H(+). Functionally, methylates ribosomal protein L11. The protein is Ribosomal protein L11 methyltransferase of Burkholderia multivorans (strain ATCC 17616 / 249).